Reading from the N-terminus, the 443-residue chain is Glucose-6-phosphate isomerase (443 aa).

Residue Glu285 is the Proton donor of the active site. Active-site residues include His306 and Lys420.

The protein belongs to the GPI family.

It is found in the cytoplasm. The catalysed reaction is alpha-D-glucose 6-phosphate = beta-D-fructose 6-phosphate. The protein operates within carbohydrate biosynthesis; gluconeogenesis. Its pathway is carbohydrate degradation; glycolysis; D-glyceraldehyde 3-phosphate and glycerone phosphate from D-glucose: step 2/4. In terms of biological role, catalyzes the reversible isomerization of glucose-6-phosphate to fructose-6-phosphate. This chain is Glucose-6-phosphate isomerase, found in Staphylococcus aureus (strain bovine RF122 / ET3-1).